A 984-amino-acid polypeptide reads, in one-letter code: Lateral signaling target protein 2 homolog (984 aa).

4 disordered regions span residues 308–462 (PLGS…DTDE), 508–527 (YGTTEQQGHQGLEEEEPSTS), 539–642 (RLRL…SSLS), and 749–900 (DNVF…SPPA). 4 stretches are compositionally biased toward low complexity: residues 326 to 356 (TTSSSQNNNNSSNNNHSSSSSTTTTMGTTST), 369 to 380 (NNHNSNSNSSTN), 387 to 404 (TLRSPSMLSLSPTSTPTA), and 412 to 433 (PSHSIASTSSAATSSTNPPADW). The span at 434 to 462 (SDGDDEDEDDDDIEVDEEDLESSDDDTDE) shows a compositional bias: acidic residues. Phosphoserine is present on residues Ser544 and Ser545. Residues 571–611 (RESHSHRHHQRHHHHHHHRHSHQHQHRQPHPHRTTRSGRKR) are compositionally biased toward basic residues. Residues 630 to 642 (LASGDTSAASSLS) are compositionally biased toward low complexity. Composition is skewed to polar residues over residues 760-779 (ATGQRHSAGASMQRNNTIDL) and 789-806 (SGATMATSRSHVTRSRSL). Ser805 carries the phosphoserine modification. Composition is skewed to low complexity over residues 811–869 (AASS…PVSA) and 886–899 (PSSATSTSATLSPP). The FYVE-type zinc-finger motif lies at 904-964 (DGKAPRCMAC…VCRDCYVREV (61 aa)). Positions 910, 913, 926, 929, 934, 937, 956, and 959 each coordinate Zn(2+).

This sequence belongs to the lst-2 family.

Its function is as follows. Negative regulator of epidermal growth factor receptor (EGFR) signaling. The polypeptide is Lateral signaling target protein 2 homolog (Drosophila yakuba (Fruit fly)).